A 751-amino-acid chain; its full sequence is Probable alpha-galactosidase C (751 aa).

Positions 1–27 are cleaved as a signal peptide; it reads MFGSPKRAALAAASLLAIFGNGPSVMA. 9 N-linked (GlcNAc...) asparagine glycosylation sites follow: Asn-49, Asn-57, Asn-162, Asn-186, Asn-194, Asn-366, Asn-433, Asn-452, and Asn-500. Asp-510 (nucleophile) is an active-site residue. Asp-572 (proton donor) is an active-site residue. Asn-720 carries an N-linked (GlcNAc...) asparagine glycan.

The protein belongs to the glycosyl hydrolase 36 family. Homotetramer. Mg(2+) is required as a cofactor. Requires NAD(+) as cofactor.

Its subcellular location is the secreted. The enzyme catalyses Hydrolysis of terminal, non-reducing alpha-D-galactose residues in alpha-D-galactosides, including galactose oligosaccharides, galactomannans and galactolipids.. Its function is as follows. Hydrolyzes a variety of simple alpha-D-galactoside as well as more complex molecules such as oligosaccharides and polysaccharides. The sequence is that of Probable alpha-galactosidase C (aglC) from Aspergillus flavus (strain ATCC 200026 / FGSC A1120 / IAM 13836 / NRRL 3357 / JCM 12722 / SRRC 167).